A 331-amino-acid polypeptide reads, in one-letter code: Tetraacyldisaccharide 4'-kinase (331 aa).

60–67 is an ATP binding site; it reads TIGGTGKT.

It belongs to the LpxK family.

It catalyses the reaction a lipid A disaccharide + ATP = a lipid IVA + ADP + H(+). The protein operates within glycolipid biosynthesis; lipid IV(A) biosynthesis; lipid IV(A) from (3R)-3-hydroxytetradecanoyl-[acyl-carrier-protein] and UDP-N-acetyl-alpha-D-glucosamine: step 6/6. Its function is as follows. Transfers the gamma-phosphate of ATP to the 4'-position of a tetraacyldisaccharide 1-phosphate intermediate (termed DS-1-P) to form tetraacyldisaccharide 1,4'-bis-phosphate (lipid IVA). The protein is Tetraacyldisaccharide 4'-kinase of Pseudomonas syringae pv. tomato (strain ATCC BAA-871 / DC3000).